The following is a 489-amino-acid chain: ATF/CREB activator 1 (489 aa).

Residues 384-447 enclose the bZIP domain; the sequence is AWKRARLLER…QKMKKISRLH (64 aa). Residues 386–406 form a basic motif region; sequence KRARLLERNRIAASKCRQRKK. The interval 412-419 is leucine-zipper; sequence LQREFDQI.

This sequence belongs to the bZIP family.

The protein resides in the nucleus. Functionally, transcriptional activator of promoters containing ATF/CREB sites. Can independently stimulate transcription through ATF/CREB sites. Important for a variety of biological functions including growth on non-optimal carbon sources. Regulates the expression of COS8. Has efficient silencing blocking activities. This is ATF/CREB activator 1 (ACA1) from Saccharomyces cerevisiae (strain ATCC 204508 / S288c) (Baker's yeast).